The following is a 239-amino-acid chain: LexA repressor (239 aa).

A DNA-binding region (H-T-H motif) is located at residues 26–46 (FDEMKEALDLASKSGIHRLIT). The tract at residues 90–110 (GSLGKTPPPPARPAPVATNDD) is disordered. Active-site for autocatalytic cleavage activity residues include serine 160 and lysine 198.

Belongs to the peptidase S24 family. Homodimer.

The catalysed reaction is Hydrolysis of Ala-|-Gly bond in repressor LexA.. Functionally, represses a number of genes involved in the response to DNA damage (SOS response), including recA and lexA. In the presence of single-stranded DNA, RecA interacts with LexA causing an autocatalytic cleavage which disrupts the DNA-binding part of LexA, leading to derepression of the SOS regulon and eventually DNA repair. In Brucella anthropi (strain ATCC 49188 / DSM 6882 / CCUG 24695 / JCM 21032 / LMG 3331 / NBRC 15819 / NCTC 12168 / Alc 37) (Ochrobactrum anthropi), this protein is LexA repressor.